The sequence spans 240 residues: Demethylmenaquinone methyltransferase (240 aa).

S-adenosyl-L-methionine-binding positions include T62, D80, D102–A103, and S119.

The protein belongs to the class I-like SAM-binding methyltransferase superfamily. MenG/UbiE family.

It catalyses the reaction a 2-demethylmenaquinol + S-adenosyl-L-methionine = a menaquinol + S-adenosyl-L-homocysteine + H(+). It participates in quinol/quinone metabolism; menaquinone biosynthesis; menaquinol from 1,4-dihydroxy-2-naphthoate: step 2/2. In terms of biological role, methyltransferase required for the conversion of demethylmenaquinol (DMKH2) to menaquinol (MKH2). This Beutenbergia cavernae (strain ATCC BAA-8 / DSM 12333 / CCUG 43141 / JCM 11478 / NBRC 16432 / NCIMB 13614 / HKI 0122) protein is Demethylmenaquinone methyltransferase.